The sequence spans 25 residues: Plasticin-L1 (25 aa).

Belongs to the frog skin active peptide (FSAP) family. Plasticin subfamily. As to expression, expressed by the skin glands.

It is found in the secreted. The protein localises to the target cell membrane. Functionally, may play an immunomodulatory role in frog skin in response to microbial pathogens, since it increases the production of the pro-inflammatory cytokines TNF-alpha, IL-1 beta, IL-12, and IL-23 by mouse peritoneal macrophages and has no effect on the production of the anti-inflammatory cytokine IL-10. It is not known whether stimulation of cytokine production arises from a non-specific interaction of the peptide with the macrophage membrane or from interaction with a specific receptor. Shows a low activity in stimulating insulin release from rat BRIN-BD11 beta cells, and acts without loss of integrity of the plasma membrane. Shows a marked affinity for both neutral and anionic membranes models. Does not show antibacterial (E.coli and S.aureus). Does not show hemolytic activity against human erythrocytes. The polypeptide is Plasticin-L1 (Leptodactylus laticeps (Santa Fe frog)).